We begin with the raw amino-acid sequence, 317 residues long: Melanocyte-stimulating hormone receptor (317 aa).

Residues 1–37 lie on the Extracellular side of the membrane; it reads MPIHGAPRKLLGSLNSTPTATPKLGLAANHTGAPCLE. N-linked (GlcNAc...) asparagine glycosylation occurs at asparagine 29. A helical membrane pass occupies residues 38–63; the sequence is VSIPDGLFLSLGLVSLVENVLVVAAI. Over 64–72 the chain is Cytoplasmic; it reads AKNRNLHSP. The helical transmembrane segment at 73–93 threads the bilayer; sequence MYCFICCLALSDLLVSGSNML. At 94–118 the chain is on the extracellular side; the sequence is EMAVVLLLEGGALATRASVVQQLHN. The chain crosses the membrane as a helical span at residues 119-140; that stretch reads TIDVLTCSSMLCSLCFLGAIAV. At 141-163 the chain is on the cytoplasmic side; sequence DRHISIFYALRYHSIMTLPRAQR. A helical transmembrane segment spans residues 164 to 183; the sequence is VIAAIWVASILSSTLFITYY. At 184–191 the chain is on the extracellular side; it reads DHAAVLLC. A helical transmembrane segment spans residues 192–211; it reads LVVFFLAMLVLMAVLYVHML. Over 212–240 the chain is Cytoplasmic; the sequence is ARACQHAQGITRLHKRQPPAHQGFGLRGA. A helical transmembrane segment spans residues 241 to 266; that stretch reads ATLTILLGIFFLCWGPFFLHLKLVVF. Over 267–279 the chain is Extracellular; sequence CPQHLTCSCIFKN. A helical transmembrane segment spans residues 280–300; it reads FKVFLTLIICNTIIDPLIYAF. Residues 301 to 317 lie on the Cytoplasmic side of the membrane; it reads RSQELRRTLKEVLLCSW. Residue cysteine 315 is the site of S-palmitoyl cysteine attachment.

It belongs to the G-protein coupled receptor 1 family. Interacts with MGRN1, but does not undergo MGRN1-mediated ubiquitination; this interaction competes with GNAS-binding and thus inhibits agonist-induced cAMP production. Interacts with OPN3; the interaction results in a decrease in MC1R-mediated cAMP signaling and ultimately a decrease in melanin production in melanocytes.

It localises to the cell membrane. Its function is as follows. Receptor for MSH (alpha, beta and gamma) and ACTH. The activity of this receptor is mediated by G proteins which activate adenylate cyclase. Mediates melanogenesis, the production of eumelanin (black/brown) and phaeomelanin (red/yellow), via regulation of cAMP signaling in melanocytes. This chain is Melanocyte-stimulating hormone receptor (MC1R), found in Saimiri oerstedii (Central American squirrel monkey).